The chain runs to 444 residues: Glutamate-1-semialdehyde 2,1-aminomutase (444 aa).

An N6-(pyridoxal phosphate)lysine modification is found at lysine 278.

This sequence belongs to the class-III pyridoxal-phosphate-dependent aminotransferase family. HemL subfamily. As to quaternary structure, homodimer. The cofactor is pyridoxal 5'-phosphate.

Its subcellular location is the cytoplasm. The catalysed reaction is (S)-4-amino-5-oxopentanoate = 5-aminolevulinate. The protein operates within porphyrin-containing compound metabolism; protoporphyrin-IX biosynthesis; 5-aminolevulinate from L-glutamyl-tRNA(Glu): step 2/2. The protein is Glutamate-1-semialdehyde 2,1-aminomutase of Deinococcus radiodurans (strain ATCC 13939 / DSM 20539 / JCM 16871 / CCUG 27074 / LMG 4051 / NBRC 15346 / NCIMB 9279 / VKM B-1422 / R1).